A 173-amino-acid chain; its full sequence is 2-C-methyl-D-erythritol 2,4-cyclodiphosphate synthase (173 aa).

A divalent metal cation-binding residues include D17 and H19. 4-CDP-2-C-methyl-D-erythritol 2-phosphate-binding positions include 17–19 (DVH) and 49–50 (HS). Residue H57 participates in a divalent metal cation binding. Residues 76 to 80 (FPNTD), 147 to 150 (TTTE), and R157 contribute to the 4-CDP-2-C-methyl-D-erythritol 2-phosphate site.

The protein belongs to the IspF family. In terms of assembly, homotrimer. It depends on a divalent metal cation as a cofactor.

The enzyme catalyses 4-CDP-2-C-methyl-D-erythritol 2-phosphate = 2-C-methyl-D-erythritol 2,4-cyclic diphosphate + CMP. Its pathway is isoprenoid biosynthesis; isopentenyl diphosphate biosynthesis via DXP pathway; isopentenyl diphosphate from 1-deoxy-D-xylulose 5-phosphate: step 4/6. Involved in the biosynthesis of isopentenyl diphosphate (IPP) and dimethylallyl diphosphate (DMAPP), two major building blocks of isoprenoid compounds. Catalyzes the conversion of 4-diphosphocytidyl-2-C-methyl-D-erythritol 2-phosphate (CDP-ME2P) to 2-C-methyl-D-erythritol 2,4-cyclodiphosphate (ME-CPP) with a corresponding release of cytidine 5-monophosphate (CMP). In Ehrlichia ruminantium (strain Welgevonden), this protein is 2-C-methyl-D-erythritol 2,4-cyclodiphosphate synthase.